A 102-amino-acid chain; its full sequence is Carboxysome shell protein CcmK3 (102 aa).

The BMC domain occupies 4–90 (AVGTIQTLGF…PQENVETVMP (87 aa)).

It belongs to the bacterial microcompartments protein family. CcmK subfamily. In terms of assembly, interacts stably with CcmK4, probably forms heterohexamers with a 1:2 CcmK3:CcmK4 stoichiometry. Bulky residues in the pore region probably preclude the formation of homohexamers by this subunit.

The protein localises to the carboxysome. In terms of biological role, a non-essential, minor shell protein of the carboxysome, a polyhedral inclusion where RuBisCO (ribulose bisphosphate carboxylase, rbcL-rbcS) is sequestered. Hexamers form sheets that form the facets of the polyhedral carboxysome. In PCC 7942 there are several CcmK paralogs with presumably functional differences. This subunit probably only makes heterohexamers with CcmK4. The CcmK3-CcmK4 heterohexmers have been suggested to cap other hexamers, perhaps to alter metabolite flux. This Synechococcus elongatus (strain ATCC 33912 / PCC 7942 / FACHB-805) (Anacystis nidulans R2) protein is Carboxysome shell protein CcmK3.